Here is a 76-residue protein sequence, read N- to C-terminus: Bowman-Birk type proteinase inhibitor DE-4 (76 aa).

Disulfide bonds link cysteine 15–cysteine 69, cysteine 16–cysteine 31, cysteine 19–cysteine 65, cysteine 21–cysteine 29, cysteine 39–cysteine 46, cysteine 43–cysteine 58, and cysteine 48–cysteine 56.

This sequence belongs to the Bowman-Birk serine protease inhibitor family.

This chain is Bowman-Birk type proteinase inhibitor DE-4, found in Macrotyloma axillare (Perennial horse gram).